The sequence spans 565 residues: Urocanate hydratase (565 aa).

NAD(+) is bound by residues 61–62, Gln139, 185–187, Glu205, Arg210, 251–252, 272–276, 282–283, and Tyr331; these read GG, GMG, NA, QTSAH, and YL. Residue Cys419 is part of the active site. The tract at residues 453–472 is disordered; the sequence is LDSGSVASPNRETESMRDGS. Residues 463–472 are compositionally biased toward basic and acidic residues; sequence RETESMRDGS. Gly501 is a binding site for NAD(+).

This sequence belongs to the urocanase family. NAD(+) serves as cofactor.

It localises to the cytoplasm. It catalyses the reaction 4-imidazolone-5-propanoate = trans-urocanate + H2O. The protein operates within amino-acid degradation; L-histidine degradation into L-glutamate; N-formimidoyl-L-glutamate from L-histidine: step 2/3. Its function is as follows. Catalyzes the conversion of urocanate to 4-imidazolone-5-propionate. In Pseudomonas savastanoi pv. phaseolicola (strain 1448A / Race 6) (Pseudomonas syringae pv. phaseolicola (strain 1448A / Race 6)), this protein is Urocanate hydratase.